Here is a 246-residue protein sequence, read N- to C-terminus: MLKVLVVDDEMLARDELKYLLERTKEVEIIGEADCVEDALEELMQSRPDIVFLDIQLSDDNGFEIANILKKMKNPPAIVFATAYDQYALQAFEVDALDYILKPFDEERIVQTLKKYKKQKQSQIETKHEIKGTDVTVEMHKLALPIEESIVLVNIEDIVYVGLVDGKVTVKTMRETYVTHDTLVILEKKLPQVSFMRVHRSFIANINHITEIQPWFNSTYNLIMKEGSKVPVSRTYAKELKKLLRI.

In terms of domain architecture, Response regulatory spans 3–117 (KVLVVDDEML…RIVQTLKKYK (115 aa)). An HTH LytTR-type domain is found at 142-246 (LALPIEESIV…AKELKKLLRI (105 aa)).

Phosphorylated by LytS.

It localises to the cytoplasm. Functionally, member of the two-component regulatory system LytS/LytT that probably regulates genes involved in cell wall metabolism. The chain is Sensory transduction protein LytT (lytT) from Bacillus cereus (strain ATCC 14579 / DSM 31 / CCUG 7414 / JCM 2152 / NBRC 15305 / NCIMB 9373 / NCTC 2599 / NRRL B-3711).